Reading from the N-terminus, the 1866-residue chain is Rho GTPase-activating protein 100F (1866 aa).

Disordered regions lie at residues 22–98 (MLCC…AGVK), 262–336 (RRGN…NNYS), and 466–530 (LRSS…DTEA). Over residues 59 to 77 (GNQQHHGNQQHHGNQQQHH) the composition is skewed to low complexity. The PDZ domain maps to 179 to 264 (LVEIVKRPGQ…LVLAIRQRRG (86 aa)). A compositionally biased stretch (pro residues) spans 271 to 286 (PGPPTLSRPEQKPPPV). Residues 301-326 (TDRMPRPRSSRDRRTGDGREMTESRS) are compositionally biased toward basic and acidic residues. Serine 719 carries the post-translational modification Phosphoserine. The segment at 745-775 (AGPASPSGSILSTGGHQSPAPTPSATLPRPH) is disordered. The span at 750–760 (PSGSILSTGGH) shows a compositional bias: polar residues. Residues 789–908 (KLDKPIVDIG…LRQSPLHQLA (120 aa)) enclose the C2 domain. In terms of domain architecture, Rho-GAP spans 948 to 1148 (ADLETVVNRE…YLLQIWPQPQ (201 aa)). Disordered regions lie at residues 1273 to 1328 (GGSV…QVKI), 1356 to 1380 (PTTQ…RRGN), 1393 to 1479 (SVVN…DLVS), 1514 to 1607 (FTPI…MVST), 1644 to 1727 (YTND…YGTL), and 1819 to 1840 (DEKP…ADKG). Residues 1282–1292 (DPSPLPLPGTP) are compositionally biased toward pro residues. A compositionally biased stretch (low complexity) spans 1293–1302 (SPGSSSASTG). Polar residues-rich tracts occupy residues 1356–1377 (PTTQ…TASR), 1393–1408 (SVVN…YTGS), and 1416–1429 (GNSS…NASG). The segment covering 1443–1479 (SSATSSSSSSQATVLSAGSTATSAPTTSSDDSDDLVS) has biased composition (low complexity). Residues 1538–1587 (QLVTPISGSSSKPGATTGAISKYTTGSVESSINANSQKLSSPSRLCNSKD) are compositionally biased toward polar residues. Low complexity-rich tracts occupy residues 1590-1607 (SRTG…MVST) and 1644-1658 (YTND…SSKS). Residues 1659-1670 (GIGGGSGTGLGA) show a composition bias toward gly residues. 2 stretches are compositionally biased toward low complexity: residues 1671 to 1688 (VSGA…LFGS) and 1696 to 1720 (GSSH…NHNT). Basic and acidic residues predominate over residues 1830–1839 (HGEEKLGADK).

Interacts (via PDZ domain) with Nrx-1; may recruit Nrx-1 to the presynaptic active zone.

It is found in the presynapse. Its function is as follows. GTPase activator for the Rho-type GTPases by converting them to an inactive GDP-bound state. Promotes the anchoring of Liprin-alpha clusters at synapses. Recruits and keeps Nrx-1 levels high in active zones in the presynapse opposite the postsynaptic region. This Drosophila melanogaster (Fruit fly) protein is Rho GTPase-activating protein 100F (RhoGAP100F).